A 114-amino-acid chain; its full sequence is Pole-localizer protein TmaR (114 aa).

Positions 70-111 form a coiled coil; that stretch reads RDDYESRVDDYTIRNAELSKQRREASTKMKEQKKAHAELLKN. Positions 89 to 114 are disordered; that stretch reads KQRREASTKMKEQKKAHAELLKNAEK.

Belongs to the pole-localizer TmaR family.

It is found in the cytoplasm. Its function is as follows. Pole-localizer protein involved in the regulation of several cellular processes. The polypeptide is Pole-localizer protein TmaR (Haemophilus influenzae (strain PittEE)).